A 186-amino-acid polypeptide reads, in one-letter code: Inosine/xanthosine triphosphatase (186 aa).

Position 75 (glutamine 75) interacts with Mg(2+).

Belongs to the YjjX NTPase family. As to quaternary structure, homodimer. Mg(2+) is required as a cofactor. Mn(2+) serves as cofactor.

The enzyme catalyses XTP + H2O = XDP + phosphate + H(+). It catalyses the reaction ITP + H2O = IDP + phosphate + H(+). In terms of biological role, phosphatase that hydrolyzes non-canonical purine nucleotides such as XTP and ITP to their respective diphosphate derivatives. Probably excludes non-canonical purines from DNA/RNA precursor pool, thus preventing their incorporation into DNA/RNA and avoiding chromosomal lesions. The sequence is that of Inosine/xanthosine triphosphatase from Shewanella baltica (strain OS185).